Here is a 511-residue protein sequence, read N- to C-terminus: Maturase K (511 aa).

Belongs to the intron maturase 2 family. MatK subfamily.

Its subcellular location is the plastid. It is found in the chloroplast. Functionally, usually encoded in the trnK tRNA gene intron. Probably assists in splicing its own and other chloroplast group II introns. This chain is Maturase K, found in Triticum aestivum (Wheat).